The chain runs to 342 residues: Ion-translocating oxidoreductase complex subunit D (342 aa).

3 helical membrane-spanning segments follow: residues G42–L62, N68–P90, and A124–A144. T171 is modified (FMN phosphoryl threonine). Transmembrane regions (helical) follow at residues F200–I220, W227–I247, F252–A272, L286–P306, and A308–Q328.

The protein belongs to the NqrB/RnfD family. As to quaternary structure, the complex is composed of six subunits: RnfA, RnfB, RnfC, RnfD, RnfE and RnfG. The cofactor is FMN.

Its subcellular location is the cell inner membrane. In terms of biological role, part of a membrane-bound complex that couples electron transfer with translocation of ions across the membrane. In Alcanivorax borkumensis (strain ATCC 700651 / DSM 11573 / NCIMB 13689 / SK2), this protein is Ion-translocating oxidoreductase complex subunit D.